A 282-amino-acid chain; its full sequence is HTH-type transcriptional activator RhaR (282 aa).

Positions 179–277 (DKLITRLAAS…GMTPSQWRHL (99 aa)) constitute an HTH araC/xylS-type domain. 2 consecutive DNA-binding regions (H-T-H motif) follow at residues 196–217 (DKFC…RQQT) and 244–267 (ISDI…TRET).

As to quaternary structure, binds DNA as a dimer.

It is found in the cytoplasm. Its function is as follows. Activates expression of the rhaSR operon in response to L-rhamnose. This chain is HTH-type transcriptional activator RhaR, found in Escherichia coli (strain K12 / MC4100 / BW2952).